A 220-amino-acid polypeptide reads, in one-letter code: Metalloproteinase inhibitor 2 (220 aa).

Residues 1–26 form the signal peptide; that stretch reads MGATARSLRLALGLLLLGTLPRGADA. Cys27 contacts Zn(2+). 2 involved in metalloproteinase-binding regions span residues 27-30 and 95-96; these read CSCS and SA. Intrachain disulfides connect Cys27–Cys98, Cys29–Cys127, Cys39–Cys152, Cys154–Cys201, Cys159–Cys164, and Cys172–Cys193. In terms of domain architecture, NTR spans 27–152; that stretch reads CSCSPVHPQQ…SLNHRYQMGC (126 aa).

It belongs to the protease inhibitor I35 (TIMP) family. As to quaternary structure, interacts (via the C-terminal) with MMP2 (via the C-terminal PEX domain); the interaction inhibits the MMP2 activity. In terms of processing, the activity of TIMP2 is dependent on the presence of disulfide bonds. As to expression, predominantly expressed in the lung in alveolar macrophages and epithelial cells. Also found in brain, kidney, intestine, spleen and heart.

The protein localises to the secreted. In terms of biological role, complexes with metalloproteinases (such as collagenases) and irreversibly inactivates them by binding to their catalytic zinc cofactor. The sequence is that of Metalloproteinase inhibitor 2 (TIMP2) from Cavia porcellus (Guinea pig).